The sequence spans 338 residues: UPF0104 membrane protein MTH_1261 (338 aa).

The next 8 membrane-spanning stretches (helical) occupy residues 6-26 (AILI…IGPG), 36-56 (DPVY…LFTL), 124-144 (LDTF…VLYF), 149-169 (WILA…FLAL), 231-251 (ISFL…TAFG), 254-274 (ISLL…MIPL), 275-295 (LPGG…YAGV), and 310-330 (ISFW…GSSV).

It belongs to the UPF0104 family.

Its subcellular location is the cell membrane. The polypeptide is UPF0104 membrane protein MTH_1261 (Methanothermobacter thermautotrophicus (strain ATCC 29096 / DSM 1053 / JCM 10044 / NBRC 100330 / Delta H) (Methanobacterium thermoautotrophicum)).